A 473-amino-acid polypeptide reads, in one-letter code: Argininosuccinate lyase (473 aa).

This sequence belongs to the lyase 1 family. Argininosuccinate lyase subfamily.

The protein localises to the cytoplasm. It catalyses the reaction 2-(N(omega)-L-arginino)succinate = fumarate + L-arginine. It functions in the pathway amino-acid biosynthesis; L-arginine biosynthesis; L-arginine from L-ornithine and carbamoyl phosphate: step 3/3. The sequence is that of Argininosuccinate lyase from Bordetella pertussis (strain Tohama I / ATCC BAA-589 / NCTC 13251).